The primary structure comprises 321 residues: Lipoyl synthase (321 aa).

Residues Cys68, Cys73, Cys79, Cys94, Cys98, Cys101, and Ser308 each contribute to the [4Fe-4S] cluster site. The 218-residue stretch at Phe80 to Thr297 folds into the Radical SAM core domain.

This sequence belongs to the radical SAM superfamily. Lipoyl synthase family. It depends on [4Fe-4S] cluster as a cofactor.

It is found in the cytoplasm. The catalysed reaction is [[Fe-S] cluster scaffold protein carrying a second [4Fe-4S](2+) cluster] + N(6)-octanoyl-L-lysyl-[protein] + 2 oxidized [2Fe-2S]-[ferredoxin] + 2 S-adenosyl-L-methionine + 4 H(+) = [[Fe-S] cluster scaffold protein] + N(6)-[(R)-dihydrolipoyl]-L-lysyl-[protein] + 4 Fe(3+) + 2 hydrogen sulfide + 2 5'-deoxyadenosine + 2 L-methionine + 2 reduced [2Fe-2S]-[ferredoxin]. The protein operates within protein modification; protein lipoylation via endogenous pathway; protein N(6)-(lipoyl)lysine from octanoyl-[acyl-carrier-protein]: step 2/2. Its function is as follows. Catalyzes the radical-mediated insertion of two sulfur atoms into the C-6 and C-8 positions of the octanoyl moiety bound to the lipoyl domains of lipoate-dependent enzymes, thereby converting the octanoylated domains into lipoylated derivatives. The polypeptide is Lipoyl synthase (Vibrio atlanticus (strain LGP32) (Vibrio splendidus (strain Mel32))).